A 340-amino-acid chain; its full sequence is Phosphoribosylformylglycinamidine cyclo-ligase (340 aa).

The protein belongs to the AIR synthase family.

It localises to the cytoplasm. It carries out the reaction 2-formamido-N(1)-(5-O-phospho-beta-D-ribosyl)acetamidine + ATP = 5-amino-1-(5-phospho-beta-D-ribosyl)imidazole + ADP + phosphate + H(+). Its pathway is purine metabolism; IMP biosynthesis via de novo pathway; 5-amino-1-(5-phospho-D-ribosyl)imidazole from N(2)-formyl-N(1)-(5-phospho-D-ribosyl)glycinamide: step 2/2. This chain is Phosphoribosylformylglycinamidine cyclo-ligase, found in Streptococcus sanguinis (strain SK36).